A 207-amino-acid polypeptide reads, in one-letter code: Chaperone protein TorD (207 aa).

Belongs to the TorD/DmsD family. TorD subfamily.

It localises to the cytoplasm. In terms of biological role, involved in the biogenesis of TorA. Acts on TorA before the insertion of the molybdenum cofactor and, as a result, probably favors a conformation of the apoenzyme that is competent for acquiring the cofactor. The protein is Chaperone protein TorD of Aggregatibacter aphrophilus (strain NJ8700) (Haemophilus aphrophilus).